Reading from the N-terminus, the 205-residue chain is Cytochrome c biogenesis ATP-binding export protein CcmA (205 aa).

An ABC transporter domain is found at 2–204; sequence LEVSNLTAIR…SPKLRKIKLG (203 aa). Position 34–41 (34–41) interacts with ATP; it reads GRNGTGKT.

The protein belongs to the ABC transporter superfamily. CcmA exporter (TC 3.A.1.107) family. In terms of assembly, the complex is composed of two ATP-binding proteins (CcmA) and two transmembrane proteins (CcmB).

Its subcellular location is the cell inner membrane. The catalysed reaction is heme b(in) + ATP + H2O = heme b(out) + ADP + phosphate + H(+). Functionally, part of the ABC transporter complex CcmAB involved in the biogenesis of c-type cytochromes; once thought to export heme, this seems not to be the case, but its exact role is uncertain. Responsible for energy coupling to the transport system. The sequence is that of Cytochrome c biogenesis ATP-binding export protein CcmA from Vibrio parahaemolyticus serotype O3:K6 (strain RIMD 2210633).